A 252-amino-acid polypeptide reads, in one-letter code: Trans-aconitate 2-methyltransferase (252 aa).

This sequence belongs to the methyltransferase superfamily. Tam family.

The protein localises to the cytoplasm. The enzyme catalyses trans-aconitate + S-adenosyl-L-methionine = (E)-3-(methoxycarbonyl)pent-2-enedioate + S-adenosyl-L-homocysteine. Its function is as follows. Catalyzes the S-adenosylmethionine monomethyl esterification of trans-aconitate. The sequence is that of Trans-aconitate 2-methyltransferase from Shigella flexneri.